Here is a 219-residue protein sequence, read N- to C-terminus: Transmembrane protein 247 (219 aa).

2 stretches are compositionally biased toward basic and acidic residues: residues 1-10 (MAAEDREMME) and 29-45 (SKSEGKPRAYLEAESQK). The disordered stretch occupies residues 1-101 (MAAEDREMME…LPPTPGTERN (101 aa)). A coiled-coil region spans residues 121-156 (LHEKNQRQRQHEVVMEQLQRERQHEVVMEQLQQEAA). A run of 2 helical transmembrane segments spans residues 167–187 (FLLPQNQFAMFLYCFIFIHII) and 194–214 (VFFLFAKHYLFCIAAILLCLI).

It localises to the membrane. The protein is Transmembrane protein 247 (TMEM247) of Homo sapiens (Human).